Here is a 597-residue protein sequence, read N- to C-terminus: Glutamine--fructose-6-phosphate aminotransferase [isomerizing] (597 aa).

Cys-2 functions as the Nucleophile; for GATase activity in the catalytic mechanism. The Glutamine amidotransferase type-2 domain maps to Cys-2 to Glu-218. SIS domains follow at residues Ile-276–Thr-416 and Leu-449–Pro-587. The active-site For Fru-6P isomerization activity is the Lys-592.

Homodimer.

It localises to the cytoplasm. The catalysed reaction is D-fructose 6-phosphate + L-glutamine = D-glucosamine 6-phosphate + L-glutamate. Functionally, catalyzes the first step in hexosamine metabolism, converting fructose-6P into glucosamine-6P using glutamine as a nitrogen source. The polypeptide is Glutamine--fructose-6-phosphate aminotransferase [isomerizing] (Helicobacter pylori (strain J99 / ATCC 700824) (Campylobacter pylori J99)).